A 354-amino-acid polypeptide reads, in one-letter code: Phosphoribosylformylglycinamidine cyclo-ligase (354 aa).

It belongs to the AIR synthase family.

The protein resides in the cytoplasm. The enzyme catalyses 2-formamido-N(1)-(5-O-phospho-beta-D-ribosyl)acetamidine + ATP = 5-amino-1-(5-phospho-beta-D-ribosyl)imidazole + ADP + phosphate + H(+). Its pathway is purine metabolism; IMP biosynthesis via de novo pathway; 5-amino-1-(5-phospho-D-ribosyl)imidazole from N(2)-formyl-N(1)-(5-phospho-D-ribosyl)glycinamide: step 2/2. In Synechococcus sp. (strain JA-2-3B'a(2-13)) (Cyanobacteria bacterium Yellowstone B-Prime), this protein is Phosphoribosylformylglycinamidine cyclo-ligase.